We begin with the raw amino-acid sequence, 49 residues long: Large ribosomal subunit protein eL40 (49 aa).

This sequence belongs to the eukaryotic ribosomal protein eL40 family.

The protein is Large ribosomal subunit protein eL40 of Methanosarcina acetivorans (strain ATCC 35395 / DSM 2834 / JCM 12185 / C2A).